The chain runs to 431 residues: Adenylosuccinate synthetase (431 aa).

GTP contacts are provided by residues 12–18 (GDEGKGK) and 40–42 (GHT). D13 acts as the Proton acceptor in catalysis. Mg(2+) is bound by residues D13 and G40. IMP contacts are provided by residues 13–16 (DEGK), 38–41 (NAGH), T131, R145, Q225, T240, and R304. H41 acts as the Proton donor in catalysis. 300-306 (TTTGRKR) provides a ligand contact to substrate. GTP is bound by residues R306, 332–334 (KLD), and 414–416 (STS).

Belongs to the adenylosuccinate synthetase family. As to quaternary structure, homodimer. The cofactor is Mg(2+).

The protein resides in the cytoplasm. The catalysed reaction is IMP + L-aspartate + GTP = N(6)-(1,2-dicarboxyethyl)-AMP + GDP + phosphate + 2 H(+). It functions in the pathway purine metabolism; AMP biosynthesis via de novo pathway; AMP from IMP: step 1/2. Functionally, plays an important role in the de novo pathway of purine nucleotide biosynthesis. Catalyzes the first committed step in the biosynthesis of AMP from IMP. The protein is Adenylosuccinate synthetase of Dinoroseobacter shibae (strain DSM 16493 / NCIMB 14021 / DFL 12).